We begin with the raw amino-acid sequence, 225 residues long: Cytidylate kinase (225 aa).

12–20 contributes to the ATP binding site; the sequence is GPSGAGKGT.

Belongs to the cytidylate kinase family. Type 1 subfamily.

It localises to the cytoplasm. The catalysed reaction is CMP + ATP = CDP + ADP. It carries out the reaction dCMP + ATP = dCDP + ADP. This chain is Cytidylate kinase, found in Stenotrophomonas maltophilia (strain K279a).